The following is a 37-amino-acid chain: NADH dehydrogenase [ubiquinone] 1 alpha subcomplex subunit 5 (37 aa).

The protein belongs to the complex I NDUFA5 subunit family. Complex I is composed of about 45 different subunits.

It is found in the mitochondrion inner membrane. Its function is as follows. Accessory subunit of the mitochondrial membrane respiratory chain NADH dehydrogenase (Complex I), that is believed not to be involved in catalysis. Complex I functions in the transfer of electrons from NADH to the respiratory chain. The immediate electron acceptor for the enzyme is believed to be ubiquinone. This chain is NADH dehydrogenase [ubiquinone] 1 alpha subcomplex subunit 5, found in Solanum tuberosum (Potato).